We begin with the raw amino-acid sequence, 74 residues long: Antimicrobial peptide HsAp2 (74 aa).

An N-terminal signal peptide occupies residues 1–21; sequence MSRRLILILVLVAMLVKTMAG. The propeptide occupies 22–33; sequence MESKWVETTYEI. The residue at position 65 (proline 65) is a Proline amide. Residues 69-74 constitute a propeptide that is removed on maturation; sequence AISEQT.

Belongs to the non-disulfide-bridged peptide (NDBP) superfamily. Medium-length antimicrobial peptide (group 3) family. In terms of tissue distribution, expressed by the venom gland.

The protein localises to the secreted. It localises to the target cell membrane. Its function is as follows. Possesses antimicrobial activity against both Gram-negative and Gram-positive bacteria, as well as against the fungus C.tropicalis. Also possesses a relatively high hemolytic activity. May act by disrupting the integrity of the bacterial cell membrane. The polypeptide is Antimicrobial peptide HsAp2 (Heterometrus spinifer (Asia giant forest scorpion)).